A 117-amino-acid chain; its full sequence is Large ribosomal subunit protein bL20 (117 aa).

The protein belongs to the bacterial ribosomal protein bL20 family.

Functionally, binds directly to 23S ribosomal RNA and is necessary for the in vitro assembly process of the 50S ribosomal subunit. It is not involved in the protein synthesizing functions of that subunit. The polypeptide is Large ribosomal subunit protein bL20 (Roseiflexus sp. (strain RS-1)).